The primary structure comprises 513 residues: ATP synthase subunit alpha (513 aa).

Residue 169–176 (GDRQTGKT) coordinates ATP.

It belongs to the ATPase alpha/beta chains family. F-type ATPases have 2 components, CF(1) - the catalytic core - and CF(0) - the membrane proton channel. CF(1) has five subunits: alpha(3), beta(3), gamma(1), delta(1), epsilon(1). CF(0) has three main subunits: a(1), b(2) and c(9-12). The alpha and beta chains form an alternating ring which encloses part of the gamma chain. CF(1) is attached to CF(0) by a central stalk formed by the gamma and epsilon chains, while a peripheral stalk is formed by the delta and b chains.

It localises to the cell inner membrane. The enzyme catalyses ATP + H2O + 4 H(+)(in) = ADP + phosphate + 5 H(+)(out). In terms of biological role, produces ATP from ADP in the presence of a proton gradient across the membrane. The alpha chain is a regulatory subunit. The polypeptide is ATP synthase subunit alpha (Dichelobacter nodosus (strain VCS1703A)).